The chain runs to 98 residues: Aspartyl/glutamyl-tRNA(Asn/Gln) amidotransferase subunit C (98 aa).

The disordered stretch occupies residues glutamate 75–alanine 98.

It belongs to the GatC family. In terms of assembly, heterotrimer of A, B and C subunits.

The enzyme catalyses L-glutamyl-tRNA(Gln) + L-glutamine + ATP + H2O = L-glutaminyl-tRNA(Gln) + L-glutamate + ADP + phosphate + H(+). The catalysed reaction is L-aspartyl-tRNA(Asn) + L-glutamine + ATP + H2O = L-asparaginyl-tRNA(Asn) + L-glutamate + ADP + phosphate + 2 H(+). In terms of biological role, allows the formation of correctly charged Asn-tRNA(Asn) or Gln-tRNA(Gln) through the transamidation of misacylated Asp-tRNA(Asn) or Glu-tRNA(Gln) in organisms which lack either or both of asparaginyl-tRNA or glutaminyl-tRNA synthetases. The reaction takes place in the presence of glutamine and ATP through an activated phospho-Asp-tRNA(Asn) or phospho-Glu-tRNA(Gln). The polypeptide is Aspartyl/glutamyl-tRNA(Asn/Gln) amidotransferase subunit C (Pseudarthrobacter chlorophenolicus (strain ATCC 700700 / DSM 12829 / CIP 107037 / JCM 12360 / KCTC 9906 / NCIMB 13794 / A6) (Arthrobacter chlorophenolicus)).